Here is a 434-residue protein sequence, read N- to C-terminus: GTPase Obg (434 aa).

One can recognise an Obg domain in the interval 1-158 (MFLDTAKIKV…RELQLELKIL (158 aa)). Positions 159–336 (ADVGLVGFPS…LLDATAELLD (178 aa)) constitute an OBG-type G domain. Residues 165 to 172 (GFPSVGKS), 190 to 194 (FTTIV), 212 to 215 (DLPG), 282 to 285 (NKMD), and 317 to 319 (SGL) contribute to the GTP site. 2 residues coordinate Mg(2+): S172 and T192. In terms of domain architecture, OCT spans 356 to 434 (GFDEEEKAFE…IGKFEFEFVD (79 aa)).

The protein belongs to the TRAFAC class OBG-HflX-like GTPase superfamily. OBG GTPase family. Monomer. Mg(2+) is required as a cofactor.

It is found in the cytoplasm. In terms of biological role, an essential GTPase which binds GTP, GDP and possibly (p)ppGpp with moderate affinity, with high nucleotide exchange rates and a fairly low GTP hydrolysis rate. Plays a role in control of the cell cycle, stress response, ribosome biogenesis and in those bacteria that undergo differentiation, in morphogenesis control. This chain is GTPase Obg, found in Streptococcus pneumoniae serotype 19F (strain G54).